The primary structure comprises 1018 residues: Putative type I restriction enzyme MjaVIIIP endonuclease subunit (1018 aa).

Belongs to the HsdR family. As to quaternary structure, the type I restriction/modification system is composed of three polypeptides R, M and S.

The catalysed reaction is Endonucleolytic cleavage of DNA to give random double-stranded fragments with terminal 5'-phosphates, ATP is simultaneously hydrolyzed.. The restriction (R) subunit of a type I restriction enzyme that recognizes 5'-GAYN(5)GTAA-3' and cleaves a random distance away. The R subunit is required for both endonuclease and ATPase activities but not for modification. After locating a non-methylated recognition site, the enzyme complex serves as a molecular motor that translocates DNA in an ATP-dependent manner until a collision occurs that triggers cleavage. The chain is Putative type I restriction enzyme MjaVIIIP endonuclease subunit from Methanocaldococcus jannaschii (strain ATCC 43067 / DSM 2661 / JAL-1 / JCM 10045 / NBRC 100440) (Methanococcus jannaschii).